We begin with the raw amino-acid sequence, 1578 residues long: Pentafunctional AROM polypeptide (1578 aa).

Residues 1–384 are 3-dehydroquinate synthase; it reads MAEPTKIKIL…YEPKASVVPN (384 aa). NAD(+) is bound by residues 44–46, 81–84, 114–116, and Asp119; these read DTN, EVSK, and GGV. A 7-phospho-2-dehydro-3-deoxy-D-arabino-heptonate-binding site is contributed by Arg130. Position 139–140 (139–140) interacts with NAD(+); sequence TT. 7-phospho-2-dehydro-3-deoxy-D-arabino-heptonate-binding residues include Asp146 and Lys152. Position 161 (Lys161) interacts with NAD(+). Asn162 contacts 7-phospho-2-dehydro-3-deoxy-D-arabino-heptonate. Residues 179–182 and Asn190 contribute to the NAD(+) site; that span reads FLET. Position 194 (Glu194) interacts with Zn(2+). Residues 194–197 and Lys250 contribute to the 7-phospho-2-dehydro-3-deoxy-D-arabino-heptonate site; that span reads EVIK. Glu260 acts as the Proton acceptor; for 3-dehydroquinate synthase activity in catalysis. Residues 264–268 and His271 contribute to the 7-phospho-2-dehydro-3-deoxy-D-arabino-heptonate site; that span reads RNLLN. His271 lines the Zn(2+) pocket. His275 (proton acceptor; for 3-dehydroquinate synthase activity) is an active-site residue. Residues His287 and Lys356 each contribute to the 7-phospho-2-dehydro-3-deoxy-D-arabino-heptonate site. A Zn(2+)-binding site is contributed by His287. Positions 397–842 are EPSP synthase; the sequence is VHPGVEPASN…WDTLRQKFSA (446 aa). Residue Cys824 is the For EPSP synthase activity of the active site. The tract at residues 864–1055 is shikimate kinase; the sequence is TASVFIIGMR…KRKKHSFFVS (192 aa). 871–878 provides a ligand contact to ATP; the sequence is GMRGAGKT. Residues 1056–1276 are 3-dehydroquinase; that stretch reads LTLPDLRTAG…AAPGQLSATE (221 aa). His1179 serves as the catalytic Proton acceptor; for 3-dehydroquinate dehydratase activity. The active-site Schiff-base intermediate with substrate; for 3-dehydroquinate dehydratase activity is the Lys1207. The segment at 1289–1578 is shikimate dehydrogenase; the sequence is QKKFAVFGTP…EDARAAVLSS (290 aa).

This sequence in the N-terminal section; belongs to the sugar phosphate cyclases superfamily. Dehydroquinate synthase family. It in the 2nd section; belongs to the EPSP synthase family. In the 3rd section; belongs to the shikimate kinase family. The protein in the 4th section; belongs to the type-I 3-dehydroquinase family. This sequence in the C-terminal section; belongs to the shikimate dehydrogenase family. As to quaternary structure, homodimer. Zn(2+) serves as cofactor.

The protein resides in the cytoplasm. It catalyses the reaction 7-phospho-2-dehydro-3-deoxy-D-arabino-heptonate = 3-dehydroquinate + phosphate. The catalysed reaction is 3-dehydroquinate = 3-dehydroshikimate + H2O. It carries out the reaction shikimate + NADP(+) = 3-dehydroshikimate + NADPH + H(+). The enzyme catalyses shikimate + ATP = 3-phosphoshikimate + ADP + H(+). It catalyses the reaction 3-phosphoshikimate + phosphoenolpyruvate = 5-O-(1-carboxyvinyl)-3-phosphoshikimate + phosphate. It participates in metabolic intermediate biosynthesis; chorismate biosynthesis; chorismate from D-erythrose 4-phosphate and phosphoenolpyruvate: step 2/7. Its pathway is metabolic intermediate biosynthesis; chorismate biosynthesis; chorismate from D-erythrose 4-phosphate and phosphoenolpyruvate: step 3/7. The protein operates within metabolic intermediate biosynthesis; chorismate biosynthesis; chorismate from D-erythrose 4-phosphate and phosphoenolpyruvate: step 4/7. It functions in the pathway metabolic intermediate biosynthesis; chorismate biosynthesis; chorismate from D-erythrose 4-phosphate and phosphoenolpyruvate: step 5/7. It participates in metabolic intermediate biosynthesis; chorismate biosynthesis; chorismate from D-erythrose 4-phosphate and phosphoenolpyruvate: step 6/7. In terms of biological role, the AROM polypeptide catalyzes 5 consecutive enzymatic reactions in prechorismate polyaromatic amino acid biosynthesis. This is Pentafunctional AROM polypeptide from Aspergillus flavus (strain ATCC 200026 / FGSC A1120 / IAM 13836 / NRRL 3357 / JCM 12722 / SRRC 167).